Reading from the N-terminus, the 576-residue chain is TRAF-type zinc finger domain-containing protein 1 (576 aa).

A2 is modified (N-acetylalanine). The segment at 27 to 103 adopts a TRAF-type zinc-finger fold; it reads IHEIHCQRNI…DLELSVVKLK (77 aa). A phosphoserine mark is found at S278, S320, S326, S327, S409, S415, S430, and S450. Positions 402 to 432 are disordered; sequence EGIPTQDSQPEDRSPELSRRRVKHQGDLSSG. The segment covering 411–420 has biased composition (basic and acidic residues); sequence PEDRSPELSR. 2 disordered regions span residues 465 to 491 and 529 to 576; these read LNSSGPRSDCQRSPPGVLKLNNSGSQD and HGSP…EEEE. The residue at position 531 (S531) is a Phosphoserine. Residues 540–552 show a composition bias toward polar residues; that stretch reads GSRSSRVTPTAAS.

In terms of assembly, interacts with MAVS, TICAM1, TRAF1, TRAF2, TRAF3 and TRAF6. In terms of tissue distribution, expressed in vascular smooth muscle cells.

Negative feedback regulator that controls excessive innate immune responses. Regulates both Toll-like receptor 4 (TLR4) and DDX58/RIG1-like helicases (RLH) pathways. May inhibit the LTR pathway by direct interaction with TRAF6 and attenuation of NF-kappa-B activation. May negatively regulate the RLH pathway downstream from MAVS and upstream of NF-kappa-B and IRF3. The sequence is that of TRAF-type zinc finger domain-containing protein 1 (Trafd1) from Rattus norvegicus (Rat).